Reading from the N-terminus, the 732-residue chain is Elongation factor 2 (732 aa).

Residues 19 to 260 enclose the tr-type G domain; the sequence is ERIRNMGIAA…MVVKHLPNPL (242 aa). GTP is bound by residues 28-35, 94-98, and 148-151; these read AHIDHGKT, DTPGH, and NKVD. Histidine 597 carries the post-translational modification Diphthamide.

Belongs to the TRAFAC class translation factor GTPase superfamily. Classic translation factor GTPase family. EF-G/EF-2 subfamily.

It is found in the cytoplasm. Catalyzes the GTP-dependent ribosomal translocation step during translation elongation. During this step, the ribosome changes from the pre-translocational (PRE) to the post-translocational (POST) state as the newly formed A-site-bound peptidyl-tRNA and P-site-bound deacylated tRNA move to the P and E sites, respectively. Catalyzes the coordinated movement of the two tRNA molecules, the mRNA and conformational changes in the ribosome. This Thermococcus kodakarensis (strain ATCC BAA-918 / JCM 12380 / KOD1) (Pyrococcus kodakaraensis (strain KOD1)) protein is Elongation factor 2.